A 143-amino-acid chain; its full sequence is Ribonuclease H (143 aa).

The RNase H type-1 domain occupies 1–136; it reads MQEIEIFCDG…CDSLAKLEAQ (136 aa). Residues Asp-9, Glu-47, Asp-69, and Asp-128 each contribute to the Mg(2+) site.

The protein belongs to the RNase H family. As to quaternary structure, monomer. Mg(2+) is required as a cofactor.

The protein resides in the cytoplasm. The catalysed reaction is Endonucleolytic cleavage to 5'-phosphomonoester.. Endonuclease that specifically degrades the RNA of RNA-DNA hybrids. The protein is Ribonuclease H of Helicobacter pylori (strain HPAG1).